Reading from the N-terminus, the 323-residue chain is Arginase-1 (323 aa).

Residues 1–27 (MSSKPKSLEIIGAPFSKGQPRGGVEKG) are disordered. At S7 the chain carries Phosphoserine. N6-succinyllysine is present on K17. S62 and S72 each carry phosphoserine. K75 is modified (N6-succinyllysine). 4 residues coordinate Mn(2+): H101, D124, H126, and D128. Residues 126 to 130 (HTDIN) and 137 to 139 (SGN) contribute to the substrate site. S163 carries the post-translational modification Phosphoserine. D183 contacts substrate. S217 carries the phosphoserine modification. Mn(2+)-binding residues include D232 and D234. 2 residues coordinate substrate: T246 and E277. T281 carries the phosphothreonine modification.

This sequence belongs to the arginase family. As to quaternary structure, homotrimer. Interacts with CMTM6. The cofactor is Mn(2+). As to expression, expressed in macrophages. Expressed in precursor and mature group 2 innate lymphoid cells (ILC2s). Expressed in lung tumor-associated myeloid cells. Expressed in lung tumor-infiltrating dendritic cells.

It is found in the cytoplasm. The protein localises to the cytoplasmic granule. It catalyses the reaction L-arginine + H2O = urea + L-ornithine. Its pathway is nitrogen metabolism; urea cycle; L-ornithine and urea from L-arginine: step 1/1. Key element of the urea cycle converting L-arginine to urea and L-ornithine, which is further metabolized into metabolites proline and polyamides that drive collagen synthesis and bioenergetic pathways critical for cell proliferation, respectively; the urea cycle takes place primarily in the liver and, to a lesser extent, in the kidneys. In terms of biological role, functions in L-arginine homeostasis in nonhepatic tissues characterized by the competition between nitric oxide synthase (NOS) and arginase for the available intracellular substrate arginine. Arginine metabolism is a critical regulator of innate and adaptive immune responses. Involved in an antimicrobial effector pathway in polymorphonuclear granulocytes (PMN). Upon PMN cell death is liberated from the phagolysosome and depletes arginine in the microenvironment leading to suppressed T cell and natural killer (NK) cell proliferation and cytokine secretion. In group 2 innate lymphoid cells (ILC2s) promotes acute type 2 inflammation in the lung and is involved in optimal ILC2 proliferation but not survival. Plays a role in the immune response of alternatively activated or M2 macrophages in processes such as wound healing and tissue regeneration, immune defense against multicellular pathogens and parasites, and immune suppression and allergic inflammation; the regulatory outcome seems to be organ specific. In tumor-infiltrating dendritic cells (DCs) and myeloid-derived suppressor cells (MDSCs) plays a role in suppression of T cell-mediated antitumor immunity. The protein is Arginase-1 (Arg1) of Mus musculus (Mouse).